A 217-amino-acid chain; its full sequence is MTTMLSIVQVKNNEIPKTLSIKKFKLIAGVDESGCGSLVGSVIAAAVILHSIQPISGLADSKTLNKNKRLNLYKNIIKNALAWSIGYADVTEIDRSNILEARLLAMKRAVHNLSVKPDLILIDGNRSPGFTEIPYQCFNKGDARIAIISAASIIAKVTRDQDMIILDKQYPKYGFAQNKGYPTFFHLKQLALYGPISQHRKSFAPVKHVISDINRKL.

In terms of domain architecture, RNase H type-2 spans 25-215; sequence KLIAGVDESG…VKHVISDINR (191 aa). Residues Asp31, Glu32, and Asp123 each coordinate a divalent metal cation.

The protein belongs to the RNase HII family. The cofactor is Mn(2+). Mg(2+) is required as a cofactor.

It localises to the cytoplasm. The enzyme catalyses Endonucleolytic cleavage to 5'-phosphomonoester.. Functionally, endonuclease that specifically degrades the RNA of RNA-DNA hybrids. The protein is Ribonuclease HII of Blochmanniella pennsylvanica (strain BPEN).